A 597-amino-acid polypeptide reads, in one-letter code: Elongation factor 4 (597 aa).

In terms of domain architecture, tr-type G spans 2–184 (KNIRNFSIIA…EIVAKIPAPT (183 aa)). GTP contacts are provided by residues 14–19 (DHGKST) and 131–134 (NKID).

This sequence belongs to the TRAFAC class translation factor GTPase superfamily. Classic translation factor GTPase family. LepA subfamily.

The protein resides in the cell inner membrane. The catalysed reaction is GTP + H2O = GDP + phosphate + H(+). Required for accurate and efficient protein synthesis under certain stress conditions. May act as a fidelity factor of the translation reaction, by catalyzing a one-codon backward translocation of tRNAs on improperly translocated ribosomes. Back-translocation proceeds from a post-translocation (POST) complex to a pre-translocation (PRE) complex, thus giving elongation factor G a second chance to translocate the tRNAs correctly. Binds to ribosomes in a GTP-dependent manner. This chain is Elongation factor 4, found in Neisseria meningitidis serogroup C (strain 053442).